The sequence spans 384 residues: S-adenosylmethionine synthase (384 aa).

Residue histidine 15 participates in ATP binding. Aspartate 17 serves as a coordination point for Mg(2+). Glutamate 43 contributes to the K(+) binding site. Residues glutamate 56 and glutamine 99 each contribute to the L-methionine site. A flexible loop region spans residues 99-109 (QSPDINQGVDR). ATP is bound by residues 164–166 (DAK), 230–231 (RF), aspartate 239, 245–246 (RK), alanine 262, and lysine 266. An L-methionine-binding site is contributed by aspartate 239. Lysine 270 serves as a coordination point for L-methionine.

It belongs to the AdoMet synthase family. In terms of assembly, homotetramer; dimer of dimers. Mg(2+) is required as a cofactor. K(+) serves as cofactor.

Its subcellular location is the cytoplasm. It catalyses the reaction L-methionine + ATP + H2O = S-adenosyl-L-methionine + phosphate + diphosphate. It participates in amino-acid biosynthesis; S-adenosyl-L-methionine biosynthesis; S-adenosyl-L-methionine from L-methionine: step 1/1. Functionally, catalyzes the formation of S-adenosylmethionine (AdoMet) from methionine and ATP. The overall synthetic reaction is composed of two sequential steps, AdoMet formation and the subsequent tripolyphosphate hydrolysis which occurs prior to release of AdoMet from the enzyme. The sequence is that of S-adenosylmethionine synthase from Proteus mirabilis (strain HI4320).